Reading from the N-terminus, the 269-residue chain is NAD kinase (269 aa).

Asp-45 serves as the catalytic Proton acceptor. NAD(+) contacts are provided by residues 45–46 (DG), 122–123 (NE), Arg-149, Asp-151, and Ala-186.

It belongs to the NAD kinase family. A divalent metal cation serves as cofactor.

It is found in the cytoplasm. It carries out the reaction NAD(+) + ATP = ADP + NADP(+) + H(+). In terms of biological role, involved in the regulation of the intracellular balance of NAD and NADP, and is a key enzyme in the biosynthesis of NADP. Catalyzes specifically the phosphorylation on 2'-hydroxyl of the adenosine moiety of NAD to yield NADP. In Staphylococcus carnosus (strain TM300), this protein is NAD kinase.